The sequence spans 353 residues: Alanine racemase (353 aa).

Lys33 (proton acceptor; specific for D-alanine) is an active-site residue. Lys33 carries the N6-(pyridoxal phosphate)lysine modification. Residue Arg129 participates in substrate binding. Tyr250 (proton acceptor; specific for L-alanine) is an active-site residue. Met298 is a substrate binding site.

Belongs to the alanine racemase family. It depends on pyridoxal 5'-phosphate as a cofactor.

It carries out the reaction L-alanine = D-alanine. It participates in amino-acid biosynthesis; D-alanine biosynthesis; D-alanine from L-alanine: step 1/1. In terms of biological role, catalyzes the interconversion of L-alanine and D-alanine. May also act on other amino acids. This Aromatoleum aromaticum (strain DSM 19018 / LMG 30748 / EbN1) (Azoarcus sp. (strain EbN1)) protein is Alanine racemase (alr).